Reading from the N-terminus, the 50-residue chain is Protein hunchback (50 aa).

3 consecutive C2H2-type zinc fingers follow at residues 1–5, 11–33, and 39–50; these read HIRNH, FKCNKCSYSCVNKSMLNSHLKSH, and YRCADCAYATKY.

This sequence belongs to the hunchback C2H2-type zinc-finger protein family.

It localises to the nucleus. In terms of biological role, gap class segmentation protein that controls development of head structures. The chain is Protein hunchback (hb) from Schultesia lampyridiformis (Firefly mimic roach).